Consider the following 92-residue polypeptide: Long neurotoxin 469 (92 aa).

The signal sequence occupies residues 1 to 21 (MKTLLLTLVVVTIVCLDLGDS). Cystine bridges form between Cys24/Cys41, Cys34/Cys62, Cys47/Cys51, Cys66/Cys77, and Cys78/Cys83.

It belongs to the three-finger toxin family. Long-chain subfamily. Type II alpha-neurotoxin sub-subfamily. As to expression, expressed by the venom gland.

It is found in the secreted. Functionally, binds with high affinity to muscular (alpha-1/CHRNA1) and neuronal (alpha-7/CHRNA7) nicotinic acetylcholine receptor (nAChR) and inhibits acetylcholine from binding to the receptor, thereby impairing neuromuscular and neuronal transmission. The chain is Long neurotoxin 469 from Drysdalia coronoides (White-lipped snake).